Reading from the N-terminus, the 81-residue chain is Acyl carrier protein (81 aa).

The 76-residue stretch at 3–78 folds into the Carrier domain; sequence QEIFDKIKNI…EAVNIIAEKT (76 aa). An O-(pantetheine 4'-phosphoryl)serine modification is found at serine 38.

It belongs to the acyl carrier protein (ACP) family. 4'-phosphopantetheine is transferred from CoA to a specific serine of apo-ACP by AcpS. This modification is essential for activity because fatty acids are bound in thioester linkage to the sulfhydryl of the prosthetic group.

It localises to the cytoplasm. Its pathway is lipid metabolism; fatty acid biosynthesis. Functionally, carrier of the growing fatty acid chain in fatty acid biosynthesis. The chain is Acyl carrier protein from Picosynechococcus sp. (strain ATCC 27264 / PCC 7002 / PR-6) (Agmenellum quadruplicatum).